Here is a 93-residue protein sequence, read N- to C-terminus: Small ribosomal subunit protein uS19 (93 aa).

It belongs to the universal ribosomal protein uS19 family.

Protein S19 forms a complex with S13 that binds strongly to the 16S ribosomal RNA. The polypeptide is Small ribosomal subunit protein uS19 (Dehalococcoides mccartyi (strain ATCC BAA-2100 / JCM 16839 / KCTC 5957 / BAV1)).